We begin with the raw amino-acid sequence, 427 residues long: Acetylornithine aminotransferase (427 aa).

Positions 1–23 are disordered; that stretch reads MSLQTLIEQATNPPESGSAASSP. Residues 124–125 and Phe157 each bind pyridoxal 5'-phosphate; that span reads GA. Arg160 is a N(2)-acetyl-L-ornithine binding site. Pyridoxal 5'-phosphate is bound at residue 248–251; sequence DEVQ. At Lys277 the chain carries N6-(pyridoxal phosphate)lysine. Ser304 is a N(2)-acetyl-L-ornithine binding site. Thr305 contributes to the pyridoxal 5'-phosphate binding site.

Belongs to the class-III pyridoxal-phosphate-dependent aminotransferase family. ArgD subfamily. Homodimer. Pyridoxal 5'-phosphate serves as cofactor.

It is found in the cytoplasm. The catalysed reaction is N(2)-acetyl-L-ornithine + 2-oxoglutarate = N-acetyl-L-glutamate 5-semialdehyde + L-glutamate. It participates in amino-acid biosynthesis; L-arginine biosynthesis; N(2)-acetyl-L-ornithine from L-glutamate: step 4/4. The chain is Acetylornithine aminotransferase from Nostoc sp. (strain PCC 7120 / SAG 25.82 / UTEX 2576).